The sequence spans 414 residues: Lipoyl synthase, mitochondrial (414 aa).

Residues Met-1 to Ile-18 constitute a mitochondrion transit peptide. Residues Gly-51–Ser-67 show a composition bias toward polar residues. Positions Gly-51–Arg-75 are disordered. [4Fe-4S] cluster is bound by residues Cys-150, Cys-155, Cys-161, Cys-181, Cys-185, Cys-188, and Ser-396. A Radical SAM core domain is found at Gly-164–Leu-385.

This sequence belongs to the radical SAM superfamily. Lipoyl synthase family. [4Fe-4S] cluster is required as a cofactor.

It is found in the mitochondrion. It carries out the reaction [[Fe-S] cluster scaffold protein carrying a second [4Fe-4S](2+) cluster] + N(6)-octanoyl-L-lysyl-[protein] + 2 oxidized [2Fe-2S]-[ferredoxin] + 2 S-adenosyl-L-methionine + 4 H(+) = [[Fe-S] cluster scaffold protein] + N(6)-[(R)-dihydrolipoyl]-L-lysyl-[protein] + 4 Fe(3+) + 2 hydrogen sulfide + 2 5'-deoxyadenosine + 2 L-methionine + 2 reduced [2Fe-2S]-[ferredoxin]. Its pathway is protein modification; protein lipoylation via endogenous pathway; protein N(6)-(lipoyl)lysine from octanoyl-[acyl-carrier-protein]: step 2/2. Functionally, catalyzes the radical-mediated insertion of two sulfur atoms into the C-6 and C-8 positions of the octanoyl moiety bound to the lipoyl domains of lipoate-dependent enzymes, thereby converting the octanoylated domains into lipoylated derivatives. This is Lipoyl synthase, mitochondrial from Saccharomyces cerevisiae (strain RM11-1a) (Baker's yeast).